We begin with the raw amino-acid sequence, 315 residues long: tRNA dimethylallyltransferase (315 aa).

Residue 13 to 20 (GPTASGKT) participates in ATP binding. Residue 15–20 (TASGKT) participates in substrate binding. Interaction with substrate tRNA regions lie at residues 38–41 (DSAL), 162–166 (QRLSR), 243–248 (RCVGYR), and 276–283 (KRQITWLR).

This sequence belongs to the IPP transferase family. Monomer. It depends on Mg(2+) as a cofactor.

It catalyses the reaction adenosine(37) in tRNA + dimethylallyl diphosphate = N(6)-dimethylallyladenosine(37) in tRNA + diphosphate. Catalyzes the transfer of a dimethylallyl group onto the adenine at position 37 in tRNAs that read codons beginning with uridine, leading to the formation of N6-(dimethylallyl)adenosine (i(6)A). The protein is tRNA dimethylallyltransferase of Vibrio vulnificus (strain CMCP6).